The following is a 225-amino-acid chain: ATP-dependent dethiobiotin synthetase BioD (225 aa).

12–17 is an ATP binding site; the sequence is EVGKTY. Residue T16 participates in Mg(2+) binding. K37 is a catalytic residue. Position 41 (S41) interacts with substrate. ATP-binding positions include D52, 114 to 117, and 174 to 175; these read EGAG and NC. Mg(2+)-binding residues include D52 and E114.

It belongs to the dethiobiotin synthetase family. Homodimer. Requires Mg(2+) as cofactor.

The protein localises to the cytoplasm. It catalyses the reaction (7R,8S)-7,8-diammoniononanoate + CO2 + ATP = (4R,5S)-dethiobiotin + ADP + phosphate + 3 H(+). Its pathway is cofactor biosynthesis; biotin biosynthesis; biotin from 7,8-diaminononanoate: step 1/2. Functionally, catalyzes a mechanistically unusual reaction, the ATP-dependent insertion of CO2 between the N7 and N8 nitrogen atoms of 7,8-diaminopelargonic acid (DAPA, also called 7,8-diammoniononanoate) to form a ureido ring. The sequence is that of ATP-dependent dethiobiotin synthetase BioD from Francisella tularensis subsp. mediasiatica (strain FSC147).